Here is a 384-residue protein sequence, read N- to C-terminus: F-box protein At2g07140 (384 aa).

The F-box domain maps to 1–46; it reads MTLPELPKDLVEEILSFVPATSLKRLRSTCKGWNRLFKDDKRFTRI.

The sequence is that of F-box protein At2g07140 from Arabidopsis thaliana (Mouse-ear cress).